The primary structure comprises 293 residues: Probable E3 ubiquitin-protein ligase RNF144A-B (293 aa).

Residues 16–237 (PLLSCKLCLG…YDKGPCRNKL (222 aa)) form a TRIAD supradomain region. Cysteine 20, cysteine 23, cysteine 43, cysteine 46, cysteine 111, cysteine 116, cysteine 135, cysteine 138, cysteine 143, cysteine 146, histidine 151, cysteine 156, cysteine 186, and cysteine 189 together coordinate Zn(2+). The segment at 20–70 (CKLCLGEFPLEQMTTISQCQCIFCSLCLKQYVELLIKEGLETAISCPDSAC) adopts an RING-type 1 zinc-finger fold. The segment at 91–156 (QHYKRLQFER…RADCHTGQAC (66 aa)) adopts an IBR-type zinc-finger fold. The segment at 186 to 215 (CPKCKVYIERDEGCAQMMCKNCKHAFCWYC) adopts an RING-type 2; atypical zinc-finger fold. The active site involves cysteine 199. The Zn(2+) site is built by cysteine 204, cysteine 207, cysteine 212, cysteine 215, histidine 227, and cysteine 233. Residues 251-271 (VVGIFAGFGLLLLVASPFLLL) form a helical membrane-spanning segment.

This sequence belongs to the RBR family. RNF144 subfamily.

Its subcellular location is the membrane. It carries out the reaction [E2 ubiquitin-conjugating enzyme]-S-ubiquitinyl-L-cysteine + [acceptor protein]-L-lysine = [E2 ubiquitin-conjugating enzyme]-L-cysteine + [acceptor protein]-N(6)-ubiquitinyl-L-lysine.. It functions in the pathway protein modification; protein ubiquitination. Its function is as follows. E3 ubiquitin-protein ligase which accepts ubiquitin from E2 ubiquitin-conjugating enzymes ube2l3 and ube2l6 in the form of a thioester and then directly transfers the ubiquitin to targeted substrates. This is Probable E3 ubiquitin-protein ligase RNF144A-B (rnf144ab) from Danio rerio (Zebrafish).